Consider the following 230-residue polypeptide: MKKLEALLENSFNIRFDDKRLLETAFTHTSYANEHRLLNISHNERLEFLGDAVLQLIISEYLFAKYPKQTEGDMSKLRSTIVREESLAGFSRYCSFDAYIKLGKGEEKSGGRHRDTILGDLFEAFLGALLLDKGIEEVRRFLNQVMIPQVEQGTFEKVKDYKTCLQELLQAKGDVVIDYQVISETGPAHAKQFEVAVLVDEDRLSKGTGRSKKLAEQDAAKNALAQLSEV.

An RNase III domain is found at 5–134 (EALLENSFNI…FLGALLLDKG (130 aa)). Glu47 provides a ligand contact to Mg(2+). Residue Asp51 is part of the active site. Asp120 and Glu123 together coordinate Mg(2+). Glu123 is a catalytic residue. The DRBM domain maps to 160 to 229 (DYKTCLQELL…AKNALAQLSE (70 aa)).

This sequence belongs to the ribonuclease III family. As to quaternary structure, homodimer. Mg(2+) serves as cofactor.

The protein resides in the cytoplasm. The enzyme catalyses Endonucleolytic cleavage to 5'-phosphomonoester.. In terms of biological role, digests double-stranded RNA. Involved in the processing of primary rRNA transcript to yield the immediate precursors to the large and small rRNAs (23S and 16S). Processes some mRNAs, and tRNAs when they are encoded in the rRNA operon. Processes pre-crRNA and tracrRNA of type II CRISPR loci if present in the organism. This is Ribonuclease 3 from Streptococcus equi subsp. zooepidemicus (strain H70).